The following is an 88-amino-acid chain: Large ribosomal subunit protein bL27 (88 aa).

The segment at 1–21 (MAHKKGQGSTQNNRDSAGRRL) is disordered.

This sequence belongs to the bacterial ribosomal protein bL27 family.

This is Large ribosomal subunit protein bL27 from Helicobacter acinonychis (strain Sheeba).